We begin with the raw amino-acid sequence, 202 residues long: Large ribosomal subunit protein bL25 (202 aa).

The segment at 180 to 202 (PKQEAFEEDAEPSPGEEPEGENQ) is disordered. Residues 185-202 (FEEDAEPSPGEEPEGENQ) show a composition bias toward acidic residues.

Belongs to the bacterial ribosomal protein bL25 family. CTC subfamily. In terms of assembly, part of the 50S ribosomal subunit; part of the 5S rRNA/L5/L18/L25 subcomplex. Contacts the 5S rRNA. Binds to the 5S rRNA independently of L5 and L18.

Functionally, this is one of the proteins that binds to the 5S RNA in the ribosome where it forms part of the central protuberance. The polypeptide is Large ribosomal subunit protein bL25 (Bacillus velezensis (strain DSM 23117 / BGSC 10A6 / LMG 26770 / FZB42) (Bacillus amyloliquefaciens subsp. plantarum)).